A 184-amino-acid polypeptide reads, in one-letter code: Ribosome-recycling factor (184 aa).

It belongs to the RRF family.

The protein localises to the cytoplasm. In terms of biological role, responsible for the release of ribosomes from messenger RNA at the termination of protein biosynthesis. May increase the efficiency of translation by recycling ribosomes from one round of translation to another. The chain is Ribosome-recycling factor from Oleidesulfovibrio alaskensis (strain ATCC BAA-1058 / DSM 17464 / G20) (Desulfovibrio alaskensis).